We begin with the raw amino-acid sequence, 62 residues long: uncharacterized protein (62 aa).

The tract at residues 17-62 (YNNYNNNNNNNNNNNNNNNNNNNNNNNNNNNNNNNNNNNNNNKNNN) is disordered.

This is an uncharacterized protein from Dictyostelium discoideum (Social amoeba).